Reading from the N-terminus, the 501-residue chain is Cilia- and flagella-associated protein 45 (501 aa).

Residues 75–114 (MTAEDVAAAKREAEAKREQLQAVSKARKEKMLKLEEEAKK) adopt a coiled-coil conformation.

Belongs to the CFAP45 family.

The protein localises to the cell projection. The protein resides in the cilium. Its subcellular location is the flagellum. In Chlamydomonas reinhardtii (Chlamydomonas smithii), this protein is Cilia- and flagella-associated protein 45.